The sequence spans 478 residues: Septin-4 (478 aa).

Disordered stretches follow at residues 40-74 and 87-115; these read DFSG…LYDD and ADNQ…LDPY. Positions 95–108 are enriched in low complexity; that stretch reads APAPLSPSARPRSP. Residues Ser-117 and Ser-118 each carry the phosphoserine modification. Residues 141–414 enclose the Septin-type G domain; sequence KGFDFTLMVA…ENYRAQCIQS (274 aa). The tract at residues 151-158 is G1 motif; the sequence is GESGLGKS. GTP is bound by residues 151–158 and Thr-185; that span reads GESGLGKS. A G3 motif region spans residues 208–211; that stretch reads DTPG. Residues 289 to 292 are G4 motif; that stretch reads AKAD. 290-298 is a GTP binding site; that stretch reads KADTLTPPE. At Ser-325 the chain carries Phosphoserine. GTP contacts are provided by Gly-348 and Arg-363. The disordered stretch occupies residues 428–448; the sequence is LTRESGTDFPIPAVPPGTDPE. Ser-432 is subject to Phosphoserine. Thr-434 is modified (phosphothreonine). Residues 446-478 adopt a coiled-coil conformation; the sequence is DPETEKLIREKDEELRRMQEILHKIQKQMKETY.

This sequence belongs to the TRAFAC class TrmE-Era-EngA-EngB-Septin-like GTPase superfamily. Septin GTPase family. Septins polymerize into heterooligomeric protein complexes that form filaments, and can associate with cellular membranes, actin filaments and microtubules. GTPase activity is required for filament formation. Interacts with SEPTIN8. Component of a septin core octameric complex consisting of SEPTIN12, SEPTIN7, SEPTIN6 and SEPTIN2 or SEPTIN4 in the order 12-7-6-2-2-6-7-12 or 12-7-6-4-4-6-7-12. Interacts with SEPTIN14 (via C-terminus). Interacts with DYRK1A. Interacts with SLC6A3/DAT and SNCA/alpha-synuclein. Interacts with STX1A; in the striatum. Interacts with XIAP (via BIR3 domain) following the induction of apoptosis. Interacts with AREL1 (via HECT domain); in the cytoplasm following induction of apoptosis. Post-translationally, ubiquitinated by AREL1. In terms of processing, phosphorylated by DYRK1A.

It localises to the cytoplasm. Its subcellular location is the cell projection. It is found in the cilium. The protein localises to the flagellum. The protein resides in the cytoplasmic vesicle. It localises to the secretory vesicle. Its subcellular location is the axon. It is found in the dendrite. The protein localises to the perikaryon. The protein resides in the synapse. In terms of biological role, filament-forming cytoskeletal GTPase. Pro-apoptotic protein involved in LGR5-positive intestinal stem cell and Paneth cell expansion in the intestines, via its interaction with XIAP. May also play a role in the regulation of cell fate in the intestine. Positive regulator of apoptosis involved in hematopoietic stem cell homeostasis; via its interaction with XIAP. Negative regulator of repair and hair follicle regeneration in response to injury, due to inhibition of hair follicle stem cell proliferation, potentially via its interaction with XIAP. Plays an important role in male fertility and sperm motility. During spermiogenesis, essential for the establishment of the annulus (a fibrous ring structure connecting the midpiece and the principal piece of the sperm flagellum) which is a requisite for the structural and mechanical integrity of the sperm. Involved in the migration of cortical neurons and the formation of neuron leading processes during embryonic development. Required for dopaminergic metabolism in presynaptic autoreceptors; potentially via activity as a presynaptic scaffold protein. In Macaca fascicularis (Crab-eating macaque), this protein is Septin-4.